Reading from the N-terminus, the 58-residue chain is Large ribosomal subunit protein uL30 (58 aa).

Belongs to the universal ribosomal protein uL30 family. In terms of assembly, part of the 50S ribosomal subunit.

The sequence is that of Large ribosomal subunit protein uL30 from Psychromonas ingrahamii (strain DSM 17664 / CCUG 51855 / 37).